Here is a 78-residue protein sequence, read N- to C-terminus: Large ribosomal subunit protein bL28 (78 aa).

The span at 1–20 shows a compositional bias: polar residues; the sequence is MSRVCQLTGTRANNGMSVSH. Residues 1–23 are disordered; it reads MSRVCQLTGTRANNGMSVSHSHI.

The protein belongs to the bacterial ribosomal protein bL28 family.

In Prochlorococcus marinus (strain NATL2A), this protein is Large ribosomal subunit protein bL28.